Here is a 262-residue protein sequence, read N- to C-terminus: Ribosomal RNA small subunit methyltransferase A (262 aa).

Positions 13, 15, 40, 61, 85, and 103 each coordinate S-adenosyl-L-methionine.

Belongs to the class I-like SAM-binding methyltransferase superfamily. rRNA adenine N(6)-methyltransferase family. RsmA subfamily.

It localises to the cytoplasm. The enzyme catalyses adenosine(1518)/adenosine(1519) in 16S rRNA + 4 S-adenosyl-L-methionine = N(6)-dimethyladenosine(1518)/N(6)-dimethyladenosine(1519) in 16S rRNA + 4 S-adenosyl-L-homocysteine + 4 H(+). In terms of biological role, specifically dimethylates two adjacent adenosines (A1518 and A1519) in the loop of a conserved hairpin near the 3'-end of 16S rRNA in the 30S particle. May play a critical role in biogenesis of 30S subunits. The chain is Ribosomal RNA small subunit methyltransferase A from Bordetella avium (strain 197N).